Consider the following 454-residue polypeptide: UPF0210 protein Mlab_1030 (454 aa).

Belongs to the UPF0210 family.

The polypeptide is UPF0210 protein Mlab_1030 (Methanocorpusculum labreanum (strain ATCC 43576 / DSM 4855 / Z)).